Reading from the N-terminus, the 201-residue chain is Holliday junction branch migration complex subunit RuvA (201 aa).

Positions 1 to 64 (MFAYIKGVLA…EFSHTLYGFL (64 aa)) are domain I. Residues 65 to 143 (SYQERDIFEI…AIGHLDTSDH (79 aa)) form a domain II region. The flexible linker stretch occupies residues 144–153 (IEPLTQDPKS). The interval 153-201 (SKSVQDAMLALINLGYNQTTAQKAIKQGMKELPEEIDLAQLITVALKHV) is domain III.

Belongs to the RuvA family. In terms of assembly, homotetramer. Forms an RuvA(8)-RuvB(12)-Holliday junction (HJ) complex. HJ DNA is sandwiched between 2 RuvA tetramers; dsDNA enters through RuvA and exits via RuvB. An RuvB hexamer assembles on each DNA strand where it exits the tetramer. Each RuvB hexamer is contacted by two RuvA subunits (via domain III) on 2 adjacent RuvB subunits; this complex drives branch migration. In the full resolvosome a probable DNA-RuvA(4)-RuvB(12)-RuvC(2) complex forms which resolves the HJ.

Its subcellular location is the cytoplasm. Its function is as follows. The RuvA-RuvB-RuvC complex processes Holliday junction (HJ) DNA during genetic recombination and DNA repair, while the RuvA-RuvB complex plays an important role in the rescue of blocked DNA replication forks via replication fork reversal (RFR). RuvA specifically binds to HJ cruciform DNA, conferring on it an open structure. The RuvB hexamer acts as an ATP-dependent pump, pulling dsDNA into and through the RuvAB complex. HJ branch migration allows RuvC to scan DNA until it finds its consensus sequence, where it cleaves and resolves the cruciform DNA. This chain is Holliday junction branch migration complex subunit RuvA, found in Protochlamydia amoebophila (strain UWE25).